An 82-amino-acid chain; its full sequence is MAADRAQNLQDTFLNHVRKTKTPLTIFLVNGVKLQGIVTWFDNFCLLLRRDGHSQLVYKHAISTIMPGAPIQLFEGGEDSPA.

The Sm domain occupies 11–71 (DTFLNHVRKT…ISTIMPGAPI (61 aa)).

This sequence belongs to the Hfq family. As to quaternary structure, homohexamer.

RNA chaperone that binds small regulatory RNA (sRNAs) and mRNAs to facilitate mRNA translational regulation in response to envelope stress, environmental stress and changes in metabolite concentrations. Also binds with high specificity to tRNAs. This Rhodopseudomonas palustris (strain HaA2) protein is RNA-binding protein Hfq.